A 275-amino-acid polypeptide reads, in one-letter code: Arylalkylamine N-acetyltransferase 1 (275 aa).

Acetyl-CoA is bound by residues Leu-181–Val-183 and Gly-189–Ala-193. The N-acetyltransferase domain maps to Leu-181–Pro-254.

The protein belongs to the acetyltransferase family. AANAT subfamily. As to expression, in the adult, expressed in the midgut portion of the thoracic segments and the frontal half of the abdomen (at protein level). Expressed in the epithelial cell layer facing the lumen of the gut (at protein level). In the brain, expressed in a sub-populations of neurons and astrocytes, and in a set of distinct stripes in the optic lobes (at protein level). Expressed mainly in serotonergic neurons but also in subsets of glutamatergic, GABAergic and cholinergic neurons (at protein level).

The protein localises to the cytoplasm. It is found in the nucleus. It catalyses the reaction a 2-arylethylamine + acetyl-CoA = an N-acetyl-2-arylethylamine + CoA + H(+). The enzyme catalyses serotonin + acetyl-CoA = N-acetylserotonin + CoA + H(+). It carries out the reaction dopamine + acetyl-CoA = N-acetyldopamine + CoA + H(+). The catalysed reaction is tyramine + acetyl-CoA = N-acetyltyramine + CoA + H(+). It catalyses the reaction octopamine + acetyl-CoA = N-acetyloctopamine + CoA + H(+). The enzyme catalyses 5-methoxytryptamine + acetyl-CoA = melatonin + CoA + H(+). It carries out the reaction 2-phenylethylamine + acetyl-CoA = N-(2-phenylethyl)acetamide + CoA + H(+). The catalysed reaction is noradrenaline + acetyl-CoA = N-acetylnoradrenaline + CoA + H(+). It catalyses the reaction tyramine + butanoyl-CoA = N-butanoyltyramine + CoA + H(+). The enzyme catalyses tyramine + hexanoyl-CoA = N-hexanoyltyramine + CoA + H(+). It carries out the reaction tryptamine + acetyl-CoA = N-acetyltryptamine + CoA + H(+). The catalysed reaction is dopamine + hexadecanoyl-CoA = N-hexadecanoyl-dopamine + CoA + H(+). It catalyses the reaction dopamine + (9Z)-octadecenoyl-CoA = N-(9Z-octadecanoyl)-dopamine + CoA + H(+). The enzyme catalyses serotonin + hexadecanoyl-CoA = N-hexadecanoyl-serotonin + CoA + H(+). It carries out the reaction serotonin + (9Z)-octadecenoyl-CoA = N-(9Z-octadecenoyl)-serotonin + CoA + H(+). The catalysed reaction is serotonin + octadecanoyl-CoA = N-octadecanoyl-serotonin + CoA + H(+). It catalyses the reaction serotonin + (5Z,8Z,11Z,14Z)-eicosatetraenoyl-CoA = N-[(5Z,8Z,11Z,14Z)-eicosatetraenoyl]-serotonin + CoA + H(+). It participates in aromatic compound metabolism; melatonin biosynthesis; melatonin from serotonin: step 1/2. Its activity is regulated as follows. Inhibited by long-chain acyl-CoA thioesters, oleoyl-CoA (an analog of acetyl-CoA) and tyrosol (an analog of tyramine). Catalyzes N-acetylation of tryptamine, tyramine, dopamine, serotonin and octopamine. In astrocytes, regulates sleep homeostasis by limiting the accumulation of serotonin and dopamine in the brain upon sleep deprivation. Is not essential for sclerotization. This is Arylalkylamine N-acetyltransferase 1 from Drosophila melanogaster (Fruit fly).